We begin with the raw amino-acid sequence, 182 residues long: Guanylate kinase (182 aa).

The region spanning 2–180 is the Guanylate kinase-like domain; sequence GTLTVITGPS…ALLKLEGLMG (179 aa). 9 to 16 contributes to the ATP binding site; it reads GPSGVGKG.

It belongs to the guanylate kinase family.

Its subcellular location is the cytoplasm. The catalysed reaction is GMP + ATP = GDP + ADP. It catalyses the reaction dZMP + ATP = dZDP + ADP. It participates in purine metabolism. In terms of biological role, essential for recycling GMP and indirectly, cGMP. Its function is as follows. (Microbial infection) Catalyzes the phosphorylation of dZMP to dZDP, when the bacterium is infected by a phage that produces the substrate for the synthesis of dZTP (2- amino-2'-deoxyadenosine 5'-triphosphate), which is then used by the phage as a DNA polymerase substrate. In Parasynechococcus marenigrum (strain WH8102), this protein is Guanylate kinase.